The primary structure comprises 378 residues: Acetylornithine deacetylase (378 aa).

Zn(2+) is bound at residue histidine 76. Residue aspartate 78 is part of the active site. Aspartate 108 contributes to the Zn(2+) binding site. Glutamate 140 is an active-site residue. Positions 141, 165, and 351 each coordinate Zn(2+).

Belongs to the peptidase M20A family. ArgE subfamily. Homodimer. The cofactor is Zn(2+). Co(2+) serves as cofactor. Glutathione is required as a cofactor.

The protein localises to the cytoplasm. It carries out the reaction N(2)-acetyl-L-ornithine + H2O = L-ornithine + acetate. It participates in amino-acid biosynthesis; L-arginine biosynthesis; L-ornithine from N(2)-acetyl-L-ornithine (linear): step 1/1. Catalyzes the hydrolysis of the amide bond of N(2)-acetylated L-amino acids. Cleaves the acetyl group from N-acetyl-L-ornithine to form L-ornithine, an intermediate in L-arginine biosynthesis pathway, and a branchpoint in the synthesis of polyamines. The polypeptide is Acetylornithine deacetylase (Vibrio vulnificus (strain CMCP6)).